We begin with the raw amino-acid sequence, 199 residues long: Peroxynitrite isomerase (199 aa).

The short motif at 20 to 26 (GVWEGTG) is the GXWXGXG element. H190 contacts heme b.

It belongs to the nitrobindin family. In terms of assembly, homodimer. Requires heme b as cofactor.

It carries out the reaction peroxynitrite = nitrate. The protein operates within nitrogen metabolism. In terms of biological role, heme-binding protein able to scavenge peroxynitrite and to protect free L-tyrosine against peroxynitrite-mediated nitration, by acting as a peroxynitrite isomerase that converts peroxynitrite to nitrate. Therefore, this protein likely plays a role in peroxynitrite sensing and in the detoxification of reactive nitrogen and oxygen species (RNS and ROS, respectively). Is able to bind nitric oxide (NO) in vitro, but may act as a sensor of peroxynitrite levels in vivo. This Clavibacter michiganensis subsp. michiganensis (strain NCPPB 382) protein is Peroxynitrite isomerase.